A 280-amino-acid chain; its full sequence is Homeobox protein SMOX-1 (280 aa).

Residues 61-88 (PNNNSFQLNTTNDSNNNNTTNNGNDSRS) form a disordered region. Residues 69 to 85 (NTTNDSNNNNTTNNGND) show a composition bias toward low complexity. An Antp-type hexapeptide motif is present at residues 214 to 219 (VYPWMN). Positions 229 to 280 (QKRTRQTYTRYQTLELEKEFHFNKYLTRRRRIEIAHTLTLTERQIKIWFQNR) form a DNA-binding region, homeobox.

This sequence belongs to the Antp homeobox family.

It is found in the nucleus. The protein is Homeobox protein SMOX-1 (SMOX-1) of Schistosoma mansoni (Blood fluke).